A 1266-amino-acid polypeptide reads, in one-letter code: MWVNPEEVLLANALWITERANPYFILQRRKGHAGDGGGGGGLAGLLVGTLDVVLDSSARVAPYRILYQTPDSLVYWTIACGGSRKEITEHWEWLEQNLLQTLSIFENENDITTFVRGKIQGIIAEYNKINDVKEDDDTEKFKEAIVKFHRLFGMPEEEKLVNYYSCSYWKGKVPRQGWMYLSINHLCFYSFLMGREAKLVIRWVDITQLEKNATLLLPDVIKVSTRSSEHFFSVFLNINETFKLMEQLANIAMRQLLDNEGFEQDRSLPKLKRKSPKKVSALKRDLDARAKSERYRALFRLPKDEKLDGHTDCTLWTPFNKMHILGQMFVSTNYICFTSKEENLCSLIIPLREVTIVEKADSSSVLPSPLSISTRNRMTFLFANLKDRDFLVQRISDFLQQTTSKIYSDKEFAGSYNSSDDEVYSRPSSLVSSSPQRSTSSDADGERQFNLNGNSVPTATQTLMTMYRRRSPEEFNPKLAKEFLKEQAWKIHFAEYGQGICMYRTEKTRELVLKGIPESMRGELWLLLSGAINEKATHPGYYEDLVEKSMGKYNLATEEIERDLHRSLPEHPAFQNEMGIAALRRVLTAYAFRNPNIGYCQAMNIVTSVLLLYAKEEEAFWLLVALCERMLPDYYNTRVVGALVDQGVFEELARDYVPQLYDCMQDLGVISTISLSWFLTLFLSVMPFESAVVVVDCFFYEGIKVIFQLALAVLDANVDKLLNCKDDGEAMTVLGRYLDSVTNKDSTLPPIPHLHSLLSDDVEPYPEVDIFRLIRTSYEKFGTIRADLIEQMRFKQRLKVIQTLEDTTKRNVVRTIVTETSFTIDELEELYALFKAEHLTSCYWGGSSNALDRHDPSLPYLEQYRIDFEQFKGMFALLFPWACGTHSDVLASRLFQLLDENGDSLINFREFVSGLSAACHGDLTEKLKLLYKMHVLPEPSSDQDEPDSAFEATQYFFEDITPECTHVVGLDSRSKQGADDGFVTVSLKPDKGKRANSQENRNYLRLWTPENKSKSKNAKDLPKLNQGQFIELCKTMYNMFSEDPNEQELYHATAAVTSLLLEIGEVGKLFVAQPAKEGGSGGSGPSCHQGIPGVLFPKKGPGQPYVVESVEPLPASLAPDSEEHSLGGQMEDIKLEDSSPRDNGACSSMLISDDDTKDDSSMSSYSVLSAGSHEEDKLHCEDIGEDTVLVRSGQGTAALPRSTSLDRDWAITFEQFLASLLTEPALVKYFDKPVCMMARITSAKNIRMMGKPLTSASDYEISAMSG.

2 GRAM domains span residues 146-213 (VKFH…EKNA) and 293-361 (ERYR…EKAD). A disordered region spans residues 415-456 (SYNSSDDEVYSRPSSLVSSSPQRSTSSDADGERQFNLNGNSV). Low complexity predominate over residues 425–441 (SRPSSLVSSSPQRSTSS). The region spanning 515–702 (GIPESMRGEL…VVVDCFFYEG (188 aa)) is the Rab-GAP TBC domain. The 36-residue stretch at 886–921 (HSDVLASRLFQLLDENGDSLINFREFVSGLSAACHG) folds into the EF-hand domain. Disordered stretches follow at residues 1075–1095 (AKEG…PGVL) and 1132–1164 (DIKL…SMSS).

In terms of biological role, may act as a GTPase-activating protein for Rab family protein(s). This is TBC1 domain family member 9 (TBC1D9) from Homo sapiens (Human).